Reading from the N-terminus, the 118-residue chain is V-type proton ATPase subunit G 1 (118 aa).

Residue A2 is modified to N-acetylalanine. The disordered stretch occupies residues 55-90; it reads FQSKQQAAMGSQGNLSAEVEQATRRQVQGMQSSQQR. Composition is skewed to polar residues over residues 56 to 69 and 78 to 89; these read QSKQQAAMGSQGNL and RRQVQGMQSSQQ.

This sequence belongs to the V-ATPase G subunit family. In terms of assembly, V-ATPase is a heteromultimeric enzyme made up of two complexes: the ATP-hydrolytic V1 complex and the proton translocation V0 complex. The V1 complex consists of three catalytic AB heterodimers that form a heterohexamer, three peripheral stalks each consisting of EG heterodimers, one central rotor including subunits D and F, and the regulatory subunits C and H. The proton translocation complex V0 consists of the proton transport subunit a, a ring of proteolipid subunits c9c'', rotary subunit d, subunits e and f, and the accessory subunits ATP6AP1/Ac45 and ATP6AP2/PRR.

It localises to the apical cell membrane. In terms of biological role, subunit of the V1 complex of vacuolar(H+)-ATPase (V-ATPase), a multisubunit enzyme composed of a peripheral complex (V1) that hydrolyzes ATP and a membrane integral complex (V0) that translocates protons. V-ATPase is responsible for acidifying and maintaining the pH of intracellular compartments and in some cell types, is targeted to the plasma membrane, where it is responsible for acidifying the extracellular environment. In aerobic conditions, involved in intracellular iron homeostasis, thus triggering the activity of Fe(2+) prolyl hydroxylase (PHD) enzymes, and leading to HIF1A hydroxylation and subsequent proteasomal degradation. In Canis lupus familiaris (Dog), this protein is V-type proton ATPase subunit G 1 (ATP6V1G1).